An 82-amino-acid polypeptide reads, in one-letter code: Small ribosomal subunit protein bS16 (82 aa).

This sequence belongs to the bacterial ribosomal protein bS16 family.

In Edwardsiella ictaluri (strain 93-146), this protein is Small ribosomal subunit protein bS16.